The chain runs to 122 residues: Large ribosomal subunit protein uL14 (122 aa).

The protein belongs to the universal ribosomal protein uL14 family. As to quaternary structure, part of the 50S ribosomal subunit. Forms a cluster with proteins L3 and L19. In the 70S ribosome, L14 and L19 interact and together make contacts with the 16S rRNA in bridges B5 and B8.

Its function is as follows. Binds to 23S rRNA. Forms part of two intersubunit bridges in the 70S ribosome. In Brucella anthropi (strain ATCC 49188 / DSM 6882 / CCUG 24695 / JCM 21032 / LMG 3331 / NBRC 15819 / NCTC 12168 / Alc 37) (Ochrobactrum anthropi), this protein is Large ribosomal subunit protein uL14.